Reading from the N-terminus, the 165-residue chain is UPF0303 protein Rleg2_2653 (165 aa).

It belongs to the UPF0303 family.

This is UPF0303 protein Rleg2_2653 from Rhizobium leguminosarum bv. trifolii (strain WSM2304).